A 234-amino-acid polypeptide reads, in one-letter code: Sugar fermentation stimulation protein A (234 aa).

The segment at residues 201–220 (LLSEAQNKGVEVLAYKAELS) is a DNA-binding region (H-T-H motif).

It belongs to the SfsA family.

In terms of biological role, binds to DNA non-specifically. Could be a regulatory factor involved in maltose metabolism. This chain is Sugar fermentation stimulation protein A, found in Salmonella typhi.